Consider the following 378-residue polypeptide: Myoglobin (378 aa).

Ala-2 is modified (blocked amino end (Ala)). His-332 is a heme binding site.

This sequence belongs to the indoleamine 2,3-dioxygenase family. In terms of assembly, homodimer. The cofactor is heme.

Serves a reserve supply of oxygen and facilitates the movement of oxygen within muscles. This is Myoglobin from Haliotis diversicolor (Abalone).